Here is a 399-residue protein sequence, read N- to C-terminus: [Pyruvate dehydrogenase (acetyl-transferring)] kinase, mitochondrial (399 aa).

Residues 1-18 (MFLTRRLLGPFTSAIARK) constitute a mitochondrion transit peptide. The 238-residue stretch at 123-360 (VVETMAEGLI…DAMIFLKAIP (238 aa)) folds into the Histidine kinase domain. Residues 247–254 (ELFKNSMR), D286, 305–306 (ST), and 321–326 (GYGYGL) contribute to the ATP site.

The protein belongs to the PDK/BCKDK protein kinase family.

The protein resides in the mitochondrion matrix. The catalysed reaction is L-seryl-[pyruvate dehydrogenase E1 alpha subunit] + ATP = O-phospho-L-seryl-[pyruvate dehydrogenase E1 alpha subunit] + ADP + H(+). Inhibits the mitochondrial pyruvate dehydrogenase complex by phosphorylation of the E1 alpha subunit, thus contributing to the regulation of glucose metabolism. In Ascaris suum (Pig roundworm), this protein is [Pyruvate dehydrogenase (acetyl-transferring)] kinase, mitochondrial.